A 445-amino-acid polypeptide reads, in one-letter code: Membrane protein insertase YidC (445 aa).

5 consecutive transmembrane segments (helical) span residues 6–26 (VVAI…PIKV), 248–268 (FGWA…PLYH), 313–333 (ASGC…WSVI), 352–372 (LSAG…VASY), and 388–408 (GIIM…GLFL).

The protein belongs to the OXA1/ALB3/YidC family. Type 1 subfamily. As to quaternary structure, interacts with the Sec translocase complex via SecD. Specifically interacts with transmembrane segments of nascent integral membrane proteins during membrane integration.

The protein localises to the cell inner membrane. Required for the insertion and/or proper folding and/or complex formation of integral membrane proteins into the membrane. Involved in integration of membrane proteins that insert both dependently and independently of the Sec translocase complex, as well as at least some lipoproteins. Aids folding of multispanning membrane proteins. The chain is Membrane protein insertase YidC from Thermotoga maritima (strain ATCC 43589 / DSM 3109 / JCM 10099 / NBRC 100826 / MSB8).